Reading from the N-terminus, the 360-residue chain is Hydroxyproline O-arabinosyltransferase RDN2 (360 aa).

A helical; Signal-anchor membrane pass occupies residues 13-33 (VLGSSFATYNLVTMIIHYGSA).

It localises to the golgi apparatus membrane. The enzyme catalyses trans-4-hydroxy-L-prolyl-[protein] + UDP-beta-L-arabinofuranose = O-(beta-L-arabinofuranosyl)-trans-4-hydroxy-L-prolyl-[protein] + UDP + H(+). Functionally, glycosyltransferase involved in the O-arabinosylation of several proteins including extensins and small signaling peptides. Catalyzes the transfer of the initial L-arabinose to the hydroxyl group of Hyp residues. Probably involved in the arabinosylation of CLAVATA3/ESR-related (CLE) signaling peptides that move from root to shoot, to interact with SUNN receptor kinase signaling that regulates nodulation. Involved in long distance nodulation signaling events. Involved in the autoregulation of nodulation (AON), a long distance systemic signaling from root to shoot and back again, which allows legumes to limit the number of root nodules formed based on available nitrogen and previous rhizobial colonization. Functions in the root, upstream of the shoot receptor kinase SUNN and via CLE peptide, to control AON. The chain is Hydroxyproline O-arabinosyltransferase RDN2 from Medicago truncatula (Barrel medic).